We begin with the raw amino-acid sequence, 433 residues long: MLDIQLLRKDLDGVAKRLADRGYTLDVAAFSALEAERRAIQTHTEELQARRNSLSKQIGAMKGKGEDTSAVMAEVSGIGDDMKASEAKLGEIQARLSDLMLGMPNVAHESVPVGKDEADNVEVRRWGTPRQFDFEVKDHVDVGTPLGLDFETGAKLAGARFTMLRGPIARLHRALAQFMIDTHTQQHGYTETYTPYIVNPEILYGTGQLPKFADDMFRVEKGGAENTVTQYLISTSEISLTNTVRESIVDGAALPIKLTAHSPCFRSEAGSYGRDTRGMIRQHQFDKVEMVQVVAPETSYAALDEMVGHAEAILQKLGLPYRVITLCTGDMGFSAAKTFDLEVWLPAQNTYREISSCSNTEAFQARRMQARFRNAQGKPELVHTLNGSGLAVGRTLVAVLENYQNADGSVTVPEVLRPYMGGMERIDAPAQTS.

235–237 serves as a coordination point for L-serine; sequence TSE. ATP is bound at residue 266–268; it reads RSE. Glu-289 serves as a coordination point for L-serine. 353–356 contacts ATP; sequence EISS. Ser-388 is an L-serine binding site.

The protein belongs to the class-II aminoacyl-tRNA synthetase family. Type-1 seryl-tRNA synthetase subfamily. In terms of assembly, homodimer. The tRNA molecule binds across the dimer.

Its subcellular location is the cytoplasm. The enzyme catalyses tRNA(Ser) + L-serine + ATP = L-seryl-tRNA(Ser) + AMP + diphosphate + H(+). The catalysed reaction is tRNA(Sec) + L-serine + ATP = L-seryl-tRNA(Sec) + AMP + diphosphate + H(+). Its pathway is aminoacyl-tRNA biosynthesis; selenocysteinyl-tRNA(Sec) biosynthesis; L-seryl-tRNA(Sec) from L-serine and tRNA(Sec): step 1/1. Catalyzes the attachment of serine to tRNA(Ser). Is also able to aminoacylate tRNA(Sec) with serine, to form the misacylated tRNA L-seryl-tRNA(Sec), which will be further converted into selenocysteinyl-tRNA(Sec). The chain is Serine--tRNA ligase from Burkholderia cenocepacia (strain ATCC BAA-245 / DSM 16553 / LMG 16656 / NCTC 13227 / J2315 / CF5610) (Burkholderia cepacia (strain J2315)).